Consider the following 115-residue polypeptide: Small ribosomal subunit protein bS16 (115 aa).

The segment at 81-115 (GLAPKPTYNEQPKKSAPKAKAQERAKAAADAAAAA) is disordered.

The protein belongs to the bacterial ribosomal protein bS16 family.

The chain is Small ribosomal subunit protein bS16 from Gluconobacter oxydans (strain 621H) (Gluconobacter suboxydans).